We begin with the raw amino-acid sequence, 120 residues long: Xibalbin-1 (120 aa).

An N-terminal signal peptide occupies residues 1-21 (MISKILIAACALLLISHLVLA). The propeptide occupies 22–63 (VPYLEDGLNSLHNRTGESDETRGYTIQLLKEMPEDDAVEDYS). 4 disulfide bridges follow: cysteine 79-cysteine 94, cysteine 86-cysteine 99, cysteine 93-cysteine 110, and cysteine 101-cysteine 108.

The protein belongs to the xibalbin-1 family. Expressed by the venom gland. Not found in the whole body.

The protein localises to the secreted. Its function is as follows. Probable neurotoxin. Strongly inhibits voltage-gated potassium channels (Kv1.1/KCNA1, Kv1.2/KCNA2, Kv1.3/KCNA3, and Kv1.6/KCNA6, with the highest toxicity against Kv1.6 (74% inhibition at 1 uM)) and mildly inhibits sodium channels (Nav1.2/SCN2A, Nav1.4/SCN4A, Nav1.5/SCN5A, Nav1.6/SCN8A, and BgNav). Induces activation of protein kinase A type II (PKA-II) and MAP kinase Erk1/2 in primary nociceptive and non-nociceptive sensory neurons. Does not show cytotoxic activity. Does not have an impact on Ca2+, cAMP, and NO signaling in the cell types analyzed. Does not interfere with the adhesion of leukocytes to endothelial cells. The chain is Xibalbin-1 from Xibalbanus tulumensis (Blind cave remipede).